The sequence spans 238 residues: Glycerol uptake facilitator protein 4 (238 aa).

Helical transmembrane passes span Ile-2–Val-22 and Ile-39–Val-59. The short motif at Asn-62–Ala-64 is the NPA 1 element. 3 helical membrane-spanning segments follow: residues Phe-80–Ile-100, Phe-135–Val-155, and Pro-158–Gly-178. Residues Asn-185 to Ala-187 carry the NPA 2 motif. A helical transmembrane segment spans residues Tyr-211–Met-231.

The protein belongs to the MIP/aquaporin (TC 1.A.8) family.

It localises to the cell membrane. Its function is as follows. Transporter that facilitates the transmembrane diffusion of water, dihydroxyacetone, glycerol, urea, H(2)O(2) and D/L-lactic acid. Is involved in the cellular racemization of lactate and lactate metabolism, but has likely a more general physiological role. The transported molecule is indeed lactic acid and not the lactate anion, in agreement with the assumption that, with very few exceptions, MIPs (major intrinsic proteins) only facilitate the transport of uncharged solutes. This Lactiplantibacillus plantarum (strain ATCC BAA-793 / NCIMB 8826 / WCFS1) (Lactobacillus plantarum) protein is Glycerol uptake facilitator protein 4.